Reading from the N-terminus, the 421-residue chain is Histidine--tRNA ligase (421 aa).

The protein belongs to the class-II aminoacyl-tRNA synthetase family.

The protein resides in the cytoplasm. The catalysed reaction is tRNA(His) + L-histidine + ATP = L-histidyl-tRNA(His) + AMP + diphosphate + H(+). This Pyrobaculum calidifontis (strain DSM 21063 / JCM 11548 / VA1) protein is Histidine--tRNA ligase.